The chain runs to 180 residues: MSTYEEEHGIQQNSRDYQEVGGTSQEEQRRQVRSQLQGLFQNFGNTSGEGDAHSDSTLLLRLLSQMLPESLQEEWLQEMDKGKSAGCPDTFAASLPRINKKKLKATDNCSICYTNYLEDEYPLVVELPHCHHKFDLECLSVWLSRSTTCPLCRDNVMGHRIINEIDTTEAELEEDWGMYG.

The tract at residues 1 to 31 is disordered; that stretch reads MSTYEEEHGIQQNSRDYQEVGGTSQEEQRRQ. Ser2 carries the N-acetylserine modification. The segment at 109–153 adopts an RING-type zinc-finger fold; that stretch reads CSICYTNYLEDEYPLVVELPHCHHKFDLECLSVWLSRSTTCPLCR.

This is an uncharacterized protein from Saccharomyces cerevisiae (strain ATCC 204508 / S288c) (Baker's yeast).